Consider the following 304-residue polypeptide: Nod factor export ATP-binding protein I (304 aa).

In terms of domain architecture, ABC transporter spans 6–236 (IDFQQVEKRY…EIGCDVIEIY (231 aa)). 38–45 (GPNGAGKT) is an ATP binding site.

This sequence belongs to the ABC transporter superfamily. Lipooligosaccharide exporter (TC 3.A.1.102) family. As to quaternary structure, the complex is composed of two ATP-binding proteins (NodI) and two transmembrane proteins (NodJ).

The protein localises to the cell inner membrane. Functionally, part of the ABC transporter complex NodIJ involved in the export of the nodulation factors (Nod factors), the bacterial signal molecules that induce symbiosis and subsequent nodulation induction. Nod factors are LCO (lipo-chitin oligosaccharide), a modified beta-1,4-linked N-acetylglucosamine oligosaccharide. This subunit is responsible for energy coupling to the transport system. This chain is Nod factor export ATP-binding protein I, found in Burkholderia pseudomallei (strain 1710b).